A 216-amino-acid polypeptide reads, in one-letter code: Ras-related protein Rab-11A (216 aa).

Glycine 2 bears the N-acetylglycine mark. GTP-binding residues include serine 20, glycine 21, valine 22, glycine 23, lysine 24, serine 25, asparagine 26, asparagine 37, leucine 38, serine 40, serine 42, and threonine 43. Serine 25 contacts Mg(2+). Residues 36–47 carry the Switch 1 motif; that stretch reads FNLESKSTIGVE. Mg(2+) contacts are provided by threonine 43 and aspartate 66. The short motif at 67–86 is the Switch 2 element; that stretch reads TAGQERYRAITSAYYRGAVG. Glycine 69, asparagine 124, lysine 125, aspartate 127, alanine 155, and leucine 156 together coordinate GTP. The interval 183-211 is disordered; the sequence is DRRENDMSPSNNVVPIHVPPTTENKPKVQ. S-geranylgeranyl cysteine attachment occurs at residues cysteine 212 and cysteine 213. The residue at position 213 (cysteine 213) is a Cysteine methyl ester. The propeptide at 214–216 is removed in mature form; it reads QNI.

This sequence belongs to the small GTPase superfamily. Rab family. In terms of assembly, interacts (GTP-bound form) with RAB11FIPs (via their C-termini) including RAB11FIP1, RAB11FIP2, RAB11FIP3, RAB11FIP4 and RAB11FIP5 effectors. Forms a complex with RAB11FIP3 and dynein intermediate chain DYNC1LI1; the interaction between RAB11A1 and RAB11FIP3 is direct; the complex regulates endocytic trafficking. Interacts with EVI5; EVI5 and RAB11FIP3 may be mutually exclusive and compete for binding RAB11A. Interacts with SGSM1, SGSM2, SGSM3 and VIPAS39. Interacts with EXOC6 in a GTP-dependent manner. Interacts with RAB11FIP5. Interacts with STXBP6. Interacts (GDP-bound form) with ZFYVE27. Interacts with BIRC6/bruce. May interact with TBC1D14. Interacts with UNC119; in a cell cycle-dependent manner. GDP-bound and nucleotide-free forms interact with SH3BP5. Interacts (GDP-bound form) with KIF5A in a ZFYVE27-dependent manner. Interacts (GDP-bound form) with RELCH. Found in a complex composed of RELCH, OSBP1 and RAB11A. Interacts with TBC1D12. Interacts with DEF6. Interacts with ATP9A. Forms a heterotetramer with RAB11FIP3; the GTP-bound form is preferred for binding. Forms a complex with Rabin8/RAB3IP and RAB11FIP3, probably a heterohexamer with two of each protein subunit, where Rabin8/RAB3IP and RAB11FIP3 simultaneously bind to RAB11A; the complex promotes preciliary trafficking and cilia growth. Forms a complex containing RAB11A, ASAP1, Rabin8/RAB3IP, RAP11FIP3 and ARF4; the complex promotes preciliary trafficking; the complex binds to RHO in photoreceptor cells and promotes RHO ciliary transport. Interacts (GTP-bound form) with WDR44; the interaction prevents RAB11A-RAB3IP-RAB11FIP3 complex formation. The cofactor is Mg(2+). As to expression, detected in various tissues, such as brain, testis, spleen, and heart.

It is found in the cell membrane. The protein resides in the endosome membrane. It localises to the recycling endosome membrane. Its subcellular location is the cleavage furrow. The protein localises to the cytoplasmic vesicle. It is found in the phagosome. The protein resides in the cytoplasmic vesicle membrane. It localises to the golgi apparatus. Its subcellular location is the trans-Golgi network. The enzyme catalyses GTP + H2O = GDP + phosphate + H(+). Its activity is regulated as follows. Regulated by guanine nucleotide exchange factors (GEFs) which promote the exchange of bound GDP for free GTP. Regulated by GTPase activating proteins (GAPs) which increase the GTP hydrolysis activity. Inhibited by GDP dissociation inhibitors (GDIs) which prevent Rab-GDP dissociation. In terms of biological role, the small GTPases Rab are key regulators of intracellular membrane trafficking, from the formation of transport vesicles to their fusion with membranes. Rabs cycle between an inactive GDP-bound form and an active GTP-bound form that is able to recruit to membranes different set of downstream effectors directly responsible for vesicle formation, movement, tethering and fusion. The small Rab GTPase RAB11A regulates endocytic recycling. Forms a functional Rab11/RAB11FIP3/dynein complex that regulates the movement of peripheral sorting endosomes (SE) along microtubule tracks toward the microtubule organizing center/centrosome, generating the endosomal recycling compartment (ERC). Acts as a major regulator of membrane delivery during cytokinesis. Together with MYO5B and RAB8A participates in epithelial cell polarization. Together with Rabin8/RAB3IP, RAB8A, the exocyst complex, PARD3, PRKCI, ANXA2, CDC42 and DNMBP promotes transcytosis of PODXL to the apical membrane initiation sites (AMIS), apical surface formation and lumenogenesis. Together with MYO5B participates in CFTR trafficking to the plasma membrane and TF (Transferrin) recycling in nonpolarized cells. Required in a complex with MYO5B and RAB11FIP2 for the transport of NPC1L1 to the plasma membrane. Participates in the sorting and basolateral transport of CDH1 from the Golgi apparatus to the plasma membrane. Regulates the recycling of FCGRT (receptor of Fc region of monomeric IgG) to basolateral membranes. May also play a role in melanosome transport and release from melanocytes. Promotes Rabin8/RAB3IP preciliary vesicular trafficking to mother centriole by forming a ciliary targeting complex containing Rab11, ASAP1, Rabin8/RAB3IP, RAB11FIP3 and ARF4, thereby regulating ciliogenesis initiation. On the contrary, upon LPAR1 receptor signaling pathway activation, interaction with phosphorylated WDR44 prevents Rab11-RAB3IP-RAB11FIP3 complex formation and cilia growth. Participates in the export of a subset of neosynthesized proteins through a Rab8-Rab10-Rab11-endososomal dependent export route via interaction with WDR44. This chain is Ras-related protein Rab-11A, found in Rattus norvegicus (Rat).